The sequence spans 282 residues: U1 small nuclear ribonucleoprotein A (282 aa).

A2 bears the N-acetylalanine mark. An RRM 1 domain is found at 10–89 (HTIYINNLNE…KPMRIQYAKT (80 aa)). An N6-acetyllysine modification is found at K60. The interval 100 to 132 (TFVERDRKREKRKPKSQETPATKKAVQGGGATP) is disordered. T131 carries the post-translational modification Phosphothreonine. Residue R152 is modified to Omega-N-methylarginine. The RRM 2 domain occupies 208–282 (HILFLTNLPE…NAMKISFAKK (75 aa)).

The protein belongs to the RRM U1 A/B'' family. As to quaternary structure, U1 snRNP is composed of the 7 core Sm proteins SNRPB, SNRPD1, SNRPD2, SNRPD3, SNRPE, SNRPF and SNRPG that assemble in a heptameric protein ring on the Sm site of the small nuclear RNA to form the core snRNP, and at least three U1 snRNP-specific proteins SNRNP70/U1-70K, SNRPA/U1-A and SNRPC/U1-C. Interacts with SFPQ; component of a snRNP-free complex with SFPQ. Interacts with IVNS1ABP (via BACK domain); the interaction is indirect.

The protein localises to the nucleus. Its function is as follows. Component of the spliceosomal U1 snRNP, which is essential for recognition of the pre-mRNA 5' splice-site and the subsequent assembly of the spliceosome. U1 snRNP is the first snRNP to interact with pre-mRNA. This interaction is required for the subsequent binding of U2 snRNP and the U4/U6/U5 tri-snRNP. SNRPA binds stem loop II of U1 snRNA. In a snRNP-free form (SF-A) may be involved in coupled pre-mRNA splicing and polyadenylation process. May bind preferentially to the 5'-UGCAC-3' motif on RNAs. The sequence is that of U1 small nuclear ribonucleoprotein A (SNRPA) from Homo sapiens (Human).